The sequence spans 382 residues: Adenosine 3'-phospho 5'-phosphosulfate transporter 2 (382 aa).

Polar residues predominate over residues 1-10 (MSVSNRNGNG). Positions 1–33 (MSVSNRNGNGSEVIYVGDRSTNRPPRNAPSPDE) are disordered. Transmembrane regions (helical) follow at residues 56-76 (LCCA…ELIF), 83-103 (PYGW…GYVE), 121-141 (VLLA…LGYL), 144-164 (PTQV…SILI), 170-190 (GPLD…FTLA), 197-217 (NFNP…AAIG), 234-254 (VVIY…LLTG), 271-291 (FGYA…VLTL), 299-319 (LAAT…FVFF), and 323-343 (FTIN…LNVY).

This sequence belongs to the nucleotide-sugar transporter family. SLC35B subfamily.

The protein localises to the golgi apparatus membrane. Its function is as follows. Mediates the transport of adenosine 3'-phospho 5'-phosphosulfate (PAPS), from cytosol into Golgi. PAPS is a universal sulfuryl donor for sulfation events that take place in the Golgi. Essential for viability. Involved in glycosaminoglycan synthesis and the subsequent signaling. May be involved in hh and dpp signaling by controlling the sulfation of heparan sulfate (HS). This is Adenosine 3'-phospho 5'-phosphosulfate transporter 2 from Aedes aegypti (Yellowfever mosquito).